The chain runs to 306 residues: Acyl transferase (306 aa).

Catalysis depends on charge relay system residues serine 117, aspartate 214, and histidine 244.

Belongs to the LuxD family.

Its pathway is lipid metabolism; fatty acid reduction for biolumincescence. In terms of biological role, acyl transferase is part of the fatty acid reductase system required for aldehyde biosynthesis; it produces fatty acids for the luminescent reaction. The chain is Acyl transferase from Photobacterium phosphoreum.